The sequence spans 144 residues: Interferon-induced transmembrane protein 2 (144 aa).

Methionine 1 is modified (N-acetylmethionine). The Cytoplasmic portion of the chain corresponds to methionine 1 to histidine 56. Tyrosine 19 bears the Phosphotyrosine mark. Positions valine 57 to tyrosine 77 form an intramembrane region, helical. S-palmitoyl cysteine attachment occurs at residues cysteine 70, cysteine 71, and cysteine 104. The Cytoplasmic portion of the chain corresponds to alanine 78 to leucine 110. Residues isoleucine 111–valine 131 form a helical membrane-spanning segment. At phenylalanine 132–phenylalanine 144 the chain is on the extracellular side.

Belongs to the CD225/Dispanin family. As to quaternary structure, interacts with CD81. Post-translationally, palmitoylation on membrane-proximal cysteines controls clustering in membrane compartments and antiviral activity. Phosphorylation at Tyr-19 is required for endosomal and lysosomal location. In terms of tissue distribution, predominantly expressed in nascent primordial germ cells, as well as in gonadal germ cells.

It localises to the cell membrane. It is found in the lysosome membrane. The protein resides in the late endosome membrane. IFN-induced antiviral protein which inhibits the entry of viruses to the host cell cytoplasm, permitting endocytosis, but preventing subsequent viral fusion and release of viral contents into the cytosol. Active against multiple viruses, including influenza A virus, SARS coronavirus (SARS-CoV), Marburg virus (MARV) and Ebola virus (EBOV), Dengue virus (DNV) and West Nile virus (WNV). Can inhibit: influenza virus hemagglutinin protein-mediated viral entry, MARV and EBOV GP1,2-mediated viral entry and SARS-CoV S protein-mediated viral entry. Induces cell cycle arrest and mediates apoptosis by caspase activation and in p53-independent manner. The protein is Interferon-induced transmembrane protein 2 (Ifitm2) of Mus musculus (Mouse).